Here is a 475-residue protein sequence, read N- to C-terminus: UDP-N-acetylmuramate--L-alanine ligase (475 aa).

125-131 (GTHGKTT) contributes to the ATP binding site.

This sequence belongs to the MurCDEF family.

It is found in the cytoplasm. It catalyses the reaction UDP-N-acetyl-alpha-D-muramate + L-alanine + ATP = UDP-N-acetyl-alpha-D-muramoyl-L-alanine + ADP + phosphate + H(+). The protein operates within cell wall biogenesis; peptidoglycan biosynthesis. Functionally, cell wall formation. The protein is UDP-N-acetylmuramate--L-alanine ligase of Glaesserella parasuis serovar 5 (strain SH0165) (Haemophilus parasuis).